The following is a 322-amino-acid chain: uncharacterized protein (322 aa).

The next 9 membrane-spanning stretches (helical) occupy residues 5–25 (LISI…IPGI), 37–57 (IGPS…FKET), 71–91 (LPLL…LTSF), 109–129 (MMYV…MPFI), 153–173 (SFKM…LPFV), 189–209 (LFSL…VIMI), 245–265 (LLLI…APDI), 268–288 (PITI…ATFV), and 300–320 (IYPI…FALL).

Its subcellular location is the cell membrane. This is an uncharacterized protein from Methanocaldococcus jannaschii (strain ATCC 43067 / DSM 2661 / JAL-1 / JCM 10045 / NBRC 100440) (Methanococcus jannaschii).